The following is a 161-amino-acid chain: Ribosome maturation factor RimP (161 aa).

The protein belongs to the RimP family.

Its subcellular location is the cytoplasm. Its function is as follows. Required for maturation of 30S ribosomal subunits. This Janthinobacterium sp. (strain Marseille) (Minibacterium massiliensis) protein is Ribosome maturation factor RimP.